The chain runs to 158 residues: Snaclec stejaggregin-A subunit alpha (158 aa).

Residues 1–23 (MGRFISVSFGLLVVFLSLSGTGA) form the signal peptide. 3 cysteine pairs are disulfide-bonded: Cys-27-Cys-38, Cys-55-Cys-152, and Cys-127-Cys-144. Residues 34–153 (YDWYCYKPFN…CQAKNPFVCK (120 aa)) form the C-type lectin domain.

This sequence belongs to the snaclec family. Heteromultimer; disulfide-linked. In terms of tissue distribution, expressed by the venom gland.

The protein localises to the secreted. In terms of biological role, interferes with one step of hemostasis (modulation of platelet aggregation, or coagulation cascade, for example). The chain is Snaclec stejaggregin-A subunit alpha from Trimeresurus stejnegeri (Chinese green tree viper).